A 110-amino-acid polypeptide reads, in one-letter code: SOSS complex subunit C (110 aa).

This sequence belongs to the SOSS-C family. Belongs to the multiprotein complex Integrator. Component of the SOSS complex, composed of soss-b (soss-b1/nabp2 or soss-b2/nabp1), soss-a/ints3 and soss-c/inip.

It is found in the nucleus. Functionally, component of the SOSS complex, a multiprotein complex that functions downstream of the MRN complex to promote DNA repair and G2/M checkpoint. The SOSS complex associates with single-stranded DNA at DNA lesions and influences diverse endpoints in the cellular DNA damage response including cell-cycle checkpoint activation, recombinational repair and maintenance of genomic stability. Required for efficient homologous recombination-dependent repair of double-strand breaks (DSBs). The polypeptide is SOSS complex subunit C (inip) (Xenopus laevis (African clawed frog)).